Reading from the N-terminus, the 327-residue chain is GTP 3',8-cyclase (327 aa).

Residues 7–232 enclose the Radical SAM core domain; it reads HHDRQFRYLR…IKRDRTAGPA (226 aa). Arginine 16 lines the GTP pocket. Residues cysteine 23 and cysteine 27 each coordinate [4Fe-4S] cluster. Tyrosine 29 is an S-adenosyl-L-methionine binding site. Position 30 (cysteine 30) interacts with [4Fe-4S] cluster. Arginine 66 serves as a coordination point for GTP. Glycine 70 is a binding site for S-adenosyl-L-methionine. GTP is bound at residue threonine 97. An S-adenosyl-L-methionine-binding site is contributed by serine 121. A GTP-binding site is contributed by lysine 158. Position 192 (methionine 192) interacts with S-adenosyl-L-methionine. [4Fe-4S] cluster is bound by residues cysteine 255 and cysteine 258. Position 260–262 (260–262) interacts with GTP; the sequence is RLR. Cysteine 272 contributes to the [4Fe-4S] cluster binding site.

Belongs to the radical SAM superfamily. MoaA family. Monomer and homodimer. It depends on [4Fe-4S] cluster as a cofactor.

The catalysed reaction is GTP + AH2 + S-adenosyl-L-methionine = (8S)-3',8-cyclo-7,8-dihydroguanosine 5'-triphosphate + 5'-deoxyadenosine + L-methionine + A + H(+). Its pathway is cofactor biosynthesis; molybdopterin biosynthesis. Its function is as follows. Catalyzes the cyclization of GTP to (8S)-3',8-cyclo-7,8-dihydroguanosine 5'-triphosphate. The protein is GTP 3',8-cyclase of Synechococcus elongatus (strain ATCC 33912 / PCC 7942 / FACHB-805) (Anacystis nidulans R2).